The following is a 95-amino-acid chain: Large ribosomal subunit protein bL25 (95 aa).

This sequence belongs to the bacterial ribosomal protein bL25 family. As to quaternary structure, part of the 50S ribosomal subunit; part of the 5S rRNA/L5/L18/L25 subcomplex. Contacts the 5S rRNA. Binds to the 5S rRNA independently of L5 and L18.

In terms of biological role, this is one of the proteins that binds to the 5S RNA in the ribosome where it forms part of the central protuberance. The sequence is that of Large ribosomal subunit protein bL25 from Shewanella pealeana (strain ATCC 700345 / ANG-SQ1).